Consider the following 212-residue polypeptide: 2-dehydro-3-deoxy-phosphogluconate aldolase (212 aa).

Glu45 serves as the catalytic Proton acceptor. Arg49, Thr73, and Lys133 together coordinate pyruvate. Lys133 functions as the Schiff-base intermediate with substrate in the catalytic mechanism.

It belongs to the KHG/KDPG aldolase family. As to quaternary structure, homotrimer.

The protein resides in the cytoplasm. The enzyme catalyses 2-dehydro-3-deoxy-6-phospho-D-gluconate = D-glyceraldehyde 3-phosphate + pyruvate. Its pathway is carbohydrate acid metabolism; 2-dehydro-3-deoxy-D-gluconate degradation; D-glyceraldehyde 3-phosphate and pyruvate from 2-dehydro-3-deoxy-D-gluconate: step 2/2. Functionally, involved in the degradation of glucose via the Entner-Doudoroff pathway. Catalyzes the reversible, stereospecific retro-aldol cleavage of 2-keto-3-deoxy-6-phosphogluconate (KDPG) to pyruvate and D-glyceraldehyde-3-phosphate. The chain is 2-dehydro-3-deoxy-phosphogluconate aldolase (eda) from Haemophilus influenzae (strain ATCC 51907 / DSM 11121 / KW20 / Rd).